A 292-amino-acid chain; its full sequence is Non-homologous end joining protein Ku (292 aa).

Residues 9–187 (ITFGLVNVPV…TVPPITEREL (179 aa)) form the Ku domain. Positions 264-285 (AASAFPAAEKAPAGKNAATASA) are enriched in low complexity. Residues 264–292 (AASAFPAAEKAPAGKNAATASAKKARKLA) are disordered.

The protein belongs to the prokaryotic Ku family. As to quaternary structure, homodimer. Interacts with LigD.

In terms of biological role, with LigD forms a non-homologous end joining (NHEJ) DNA repair enzyme, which repairs dsDNA breaks with reduced fidelity. Binds linear dsDNA with 5'- and 3'- overhangs but not closed circular dsDNA nor ssDNA. Recruits and stimulates the ligase activity of LigD. The sequence is that of Non-homologous end joining protein Ku from Leifsonia xyli subsp. xyli (strain CTCB07).